A 677-amino-acid polypeptide reads, in one-letter code: Fermitin family homolog 1 (677 aa).

An FERM domain is found at 96–653 (MLRLRLPNLK…HEYIGGYIFL (558 aa)). Serine 170, serine 179, and serine 361 each carry phosphoserine. A PH domain is found at 337-433 (ESEVDEIEAA…EVVPNVNVAE (97 aa)).

It belongs to the kindlin family. In terms of assembly, interacts with the cytoplasmic domain of integrins ITGB1 and ITGB3.

Its subcellular location is the cytoplasm. The protein localises to the cytoskeleton. It is found in the cell junction. It localises to the focal adhesion. The protein resides in the cell projection. Its subcellular location is the ruffle membrane. In terms of biological role, involved in cell adhesion. Contributes to integrin activation. When coexpressed with talin, potentiates activation of ITGA2B. Required for normal keratinocyte proliferation. Required for normal polarization of basal keratinocytes in skin, and for normal cell shape. Required for normal adhesion of keratinocytes to fibronectin and laminin, and for normal keratinocyte migration to wound sites. This Pongo abelii (Sumatran orangutan) protein is Fermitin family homolog 1 (FERMT1).